Here is a 207-residue protein sequence, read N- to C-terminus: Claudin-11 (207 aa).

Position 1 (Met1) is a topological domain, cytoplasmic. The helical transmembrane segment at 2–22 (VATCLQVVGFVTSFVGWIGII) threads the bilayer. At 23–82 (VTTSTNDWVVTCSYTIPTCRKMDELGSKGLWADCVMATGLHHCKPLVDILILPGYAQACR) the chain is on the extracellular side. The chain crosses the membrane as a helical span at residues 83–103 (ALMIAASVLGLPGILLLLTVL). Residues 104-122 (PCIRMGHEPGVAKYRRAQL) lie on the Cytoplasmic side of the membrane. Residues 123-143 (AGVLLILLALCAIVATIWFPV) traverse the membrane as a helical segment. Over 144–157 (CAHREITIVSFGYS) the chain is Extracellular. A helical transmembrane segment spans residues 158–178 (LYAGWIGAVMCLVGGCVIVCC). Over 179 to 207 (SGDAQSFGENRFYYSSGSSSPTHAKSAHV) the chain is Cytoplasmic. A phosphoserine mark is found at Ser193, Ser194, Ser197, and Ser198.

This sequence belongs to the claudin family. In terms of assembly, interacts with tetraspanin-3/TSPAN3. Interacts with OCLN.

It is found in the cell junction. It localises to the tight junction. The protein localises to the cell membrane. Its function is as follows. Plays a major role in tight junction-specific obliteration of the intercellular space, through calcium-independent cell-adhesion activity. The polypeptide is Claudin-11 (Cldn11) (Rattus norvegicus (Rat)).